A 301-amino-acid polypeptide reads, in one-letter code: Acetylglutamate kinase (301 aa).

Residues 68-69, Arg-90, and Asn-195 each bind substrate; that span reads GG.

The protein belongs to the acetylglutamate kinase family. ArgB subfamily.

The protein localises to the cytoplasm. The catalysed reaction is N-acetyl-L-glutamate + ATP = N-acetyl-L-glutamyl 5-phosphate + ADP. It functions in the pathway amino-acid biosynthesis; L-arginine biosynthesis; N(2)-acetyl-L-ornithine from L-glutamate: step 2/4. Its function is as follows. Catalyzes the ATP-dependent phosphorylation of N-acetyl-L-glutamate. This Pseudomonas fluorescens (strain ATCC BAA-477 / NRRL B-23932 / Pf-5) protein is Acetylglutamate kinase.